We begin with the raw amino-acid sequence, 45 residues long: Monellin chain A (45 aa).

Heterodimer of an A chain and a B chain.

Functionally, taste-modifying protein; intensely sweet-tasting protein. This chain is Monellin chain A, found in Dioscoreophyllum cumminsii (Serendipity berry).